The chain runs to 147 residues: Deoxyuridine 5'-triphosphate nucleotidohydrolase (147 aa).

Substrate is bound by residues 67–69, N80, and 84–86; these read RSG and TID.

This sequence belongs to the dUTPase family. It depends on Mg(2+) as a cofactor.

It catalyses the reaction dUTP + H2O = dUMP + diphosphate + H(+). It participates in pyrimidine metabolism; dUMP biosynthesis; dUMP from dCTP (dUTP route): step 2/2. Its function is as follows. This enzyme is involved in nucleotide metabolism: it produces dUMP, the immediate precursor of thymidine nucleotides and it decreases the intracellular concentration of dUTP so that uracil cannot be incorporated into DNA. This Anaeromyxobacter dehalogenans (strain 2CP-1 / ATCC BAA-258) protein is Deoxyuridine 5'-triphosphate nucleotidohydrolase.